We begin with the raw amino-acid sequence, 623 residues long: Glutathione import ATP-binding protein GsiA (623 aa).

ABC transporter domains are found at residues 15-269 (VENL…RALL) and 314-564 (LRVR…RKLL). ATP contacts are provided by residues 49 to 56 (GESGSGKS) and 357 to 364 (GESGSGKS).

It belongs to the ABC transporter superfamily. Glutathione importer (TC 3.A.1.5.11) family. As to quaternary structure, the complex is composed of two ATP-binding proteins (GsiA), two transmembrane proteins (GsiC and GsiD) and a solute-binding protein (GsiB).

Its subcellular location is the cell inner membrane. It catalyses the reaction glutathione(out) + ATP + H2O = glutathione(in) + ADP + phosphate + H(+). Part of the ABC transporter complex GsiABCD involved in glutathione import. Responsible for energy coupling to the transport system. The chain is Glutathione import ATP-binding protein GsiA from Shigella sonnei (strain Ss046).